Consider the following 430-residue polypeptide: Histidine--tRNA ligase (430 aa).

Belongs to the class-II aminoacyl-tRNA synthetase family. In terms of assembly, homodimer.

The protein localises to the cytoplasm. The enzyme catalyses tRNA(His) + L-histidine + ATP = L-histidyl-tRNA(His) + AMP + diphosphate + H(+). In Anaplasma marginale (strain St. Maries), this protein is Histidine--tRNA ligase.